The following is a 159-amino-acid chain: Type-1 angiotensin II receptor-associated protein (159 aa).

Residues 1–23 lie on the Extracellular side of the membrane; the sequence is MELPAVNLKVILLGHWLLTTWGC. Residues 24–44 traverse the membrane as a helical segment; it reads IVFSGSYAWANFTILALGVWA. Over 45–55 the chain is Cytoplasmic; sequence VAQRDSIDAIS. Residues 56 to 76 traverse the membrane as a helical segment; the sequence is MFLGGLLATIFLDIVHISIFY. Over 77–86 the chain is Extracellular; the sequence is PRVSLTDTGR. A helical membrane pass occupies residues 87–107; that stretch reads FGVGMAILSLLLKPLSCCFVY. The Cytoplasmic portion of the chain corresponds to 108–159; the sequence is HMYRERGGELLVHTGFLGSSQDRSAYQTIDSAEAPADPFAVPEGRSQDARGY. An interaction with AGTR1 region spans residues 110–122; the sequence is YRERGGELLVHTG. Phosphoserine is present on residues serine 126 and serine 127. Threonine 135 bears the Phosphothreonine mark. 2 positions are modified to phosphoserine: serine 138 and serine 153. Residues 140–159 are disordered; that stretch reads EAPADPFAVPEGRSQDARGY.

In terms of assembly, interacts with RACK1, and with the C-terminal region of AGTR1. Ubiquitous but more abundant in kidney, heart, pancreas and thyroid.

The protein resides in the endoplasmic reticulum membrane. Its subcellular location is the golgi apparatus membrane. It localises to the cytoplasmic vesicle membrane. Appears to be a negative regulator of type-1 angiotensin II receptor-mediated signaling by regulating receptor internalization as well as mechanism of receptor desensitization such as phosphorylation. Also induces a decrease in cell proliferation and angiotensin II-stimulated transcriptional activity. The protein is Type-1 angiotensin II receptor-associated protein (AGTRAP) of Homo sapiens (Human).